The primary structure comprises 384 residues: 8-amino-7-oxononanoate synthase (384 aa).

Position 21 (Arg-21) interacts with substrate. 108 to 109 lines the pyridoxal 5'-phosphate pocket; it reads GF. His-133 contributes to the substrate binding site. Positions 179, 207, and 233 each coordinate pyridoxal 5'-phosphate. The residue at position 236 (Lys-236) is an N6-(pyridoxal phosphate)lysine. Thr-352 is a binding site for substrate.

The protein belongs to the class-II pyridoxal-phosphate-dependent aminotransferase family. BioF subfamily. In terms of assembly, homodimer. Requires pyridoxal 5'-phosphate as cofactor.

It carries out the reaction 6-carboxyhexanoyl-[ACP] + L-alanine + H(+) = (8S)-8-amino-7-oxononanoate + holo-[ACP] + CO2. The protein operates within cofactor biosynthesis; biotin biosynthesis. Functionally, catalyzes the decarboxylative condensation of pimeloyl-[acyl-carrier protein] and L-alanine to produce 8-amino-7-oxononanoate (AON), [acyl-carrier protein], and carbon dioxide. In Escherichia coli O8 (strain IAI1), this protein is 8-amino-7-oxononanoate synthase.